We begin with the raw amino-acid sequence, 259 residues long: Ribosomal RNA small subunit methyltransferase A (259 aa).

Asparagine 13, leucine 15, glycine 40, glutamate 61, aspartate 85, and asparagine 103 together coordinate S-adenosyl-L-methionine.

The protein belongs to the class I-like SAM-binding methyltransferase superfamily. rRNA adenine N(6)-methyltransferase family. RsmA subfamily.

The protein resides in the cytoplasm. It carries out the reaction adenosine(1518)/adenosine(1519) in 16S rRNA + 4 S-adenosyl-L-methionine = N(6)-dimethyladenosine(1518)/N(6)-dimethyladenosine(1519) in 16S rRNA + 4 S-adenosyl-L-homocysteine + 4 H(+). Specifically dimethylates two adjacent adenosines (A1518 and A1519) in the loop of a conserved hairpin near the 3'-end of 16S rRNA in the 30S particle. May play a critical role in biogenesis of 30S subunits. This chain is Ribosomal RNA small subunit methyltransferase A, found in Neisseria meningitidis serogroup B (strain ATCC BAA-335 / MC58).